We begin with the raw amino-acid sequence, 95 residues long: Co-chaperonin GroES (95 aa).

The protein belongs to the GroES chaperonin family. In terms of assembly, heptamer of 7 subunits arranged in a ring. Interacts with the chaperonin GroEL.

It localises to the cytoplasm. Functionally, together with the chaperonin GroEL, plays an essential role in assisting protein folding. The GroEL-GroES system forms a nano-cage that allows encapsulation of the non-native substrate proteins and provides a physical environment optimized to promote and accelerate protein folding. GroES binds to the apical surface of the GroEL ring, thereby capping the opening of the GroEL channel. The sequence is that of Co-chaperonin GroES from Streptococcus thermophilus (strain ATCC BAA-491 / LMD-9).